We begin with the raw amino-acid sequence, 388 residues long: Probable fatty acid desaturase DES1 (388 aa).

The interval 1–33 (MATTPMTVVDHEAEEAVAKAREDDKSRQVDAFD) is disordered. The span at 9–30 (VDHEAEEAVAKAREDDKSRQVD) shows a compositional bias: basic and acidic residues. 2 consecutive transmembrane segments (helical) span residues 62–82 (LWYV…AAAM) and 85–105 (WAVW…FFVL). Residues 107–111 (HDCGH) carry the Histidine box-1 motif. A helical transmembrane segment spans residues 119-139 (TLNSVVGHLLHSFILIPYHGW). The short motif at 143–147 (HRTHH) is the Histidine box-2 element. Helical transmembrane passes span 177 to 194 (IRFT…YLFY), 226 to 246 (WCIM…LQVL), and 248 to 268 (MYGL…YLHH). The Histidine box-3 signature appears at 310–314 (HVIHH).

The protein belongs to the fatty acid desaturase type 1 family. As to expression, highly expressed in root hair cells. Barely detected in panicle, shoot apex, stems and leaves.

Its subcellular location is the membrane. It functions in the pathway lipid metabolism; polyunsaturated fatty acid biosynthesis. This Sorghum bicolor (Sorghum) protein is Probable fatty acid desaturase DES1.